The sequence spans 164 residues: Urease subunit beta (164 aa).

Composition is skewed to polar residues over residues 1-10 and 20-30; these read MSTKTNSTKA and TNRGTKSSAGY. A disordered region spans residues 1 to 30; the sequence is MSTKTNSTKATSEKTDSLKTNRGTKSSAGY.

This sequence belongs to the urease beta subunit family. In terms of assembly, heterotrimer of UreA (gamma), UreB (beta) and UreC (alpha) subunits. Three heterotrimers associate to form the active enzyme.

Its subcellular location is the cytoplasm. The catalysed reaction is urea + 2 H2O + H(+) = hydrogencarbonate + 2 NH4(+). It functions in the pathway nitrogen metabolism; urea degradation; CO(2) and NH(3) from urea (urease route): step 1/1. Expression of the urease operon increases the likelihood of bacterial survival by contributing to acid resistance in vitro and in vivo in BALB/c mice. Y.enterocolitica enters the body via an oral path and must survive the acidic stomach before being able to colonize the intestinal mucosa. The protein is Urease subunit beta of Yersinia enterocolitica.